We begin with the raw amino-acid sequence, 270 residues long: Glucan endo-1,3-beta-glucosidase (270 aa).

Positions 1-18 (MNAFTFPLLLAFCAFAHG) are cleaved as a signal peptide. In terms of domain architecture, GH16 spans 22-270 (LDWEDEFNGG…VEYVKKWTWN (249 aa)). The active-site Nucleophile is the Glu137. The active-site Proton donor is the Glu142.

Belongs to the glycosyl hydrolase 16 family.

It is found in the secreted. It catalyses the reaction Hydrolysis of (1-&gt;3)-beta-D-glucosidic linkages in (1-&gt;3)-beta-D-glucans.. Ca(2+) does not affect the enzyme activity nor the thermostability. Other cations, such as Mg(2+), Mn(2+), Cu(2+), Zn(2+), Ag(+) or Hg(2+) do not cause any serious adverse effect on the activity. Also no significant change in the activity in response to the addition of 1 mM EDTA. Functionally, hydrolyzes laminarin majorily to glucose (G1), laminaribiose (L2), laminaritriose (L3), laminaritetraose (L4) and laminaripentaose (L5). Hydrolyzes laminarioligosaccharides L3, L4, L5 and laminarihexaose (L6) to G1, L2 and L3. Hardly hydrolyzes L2. Does not hydrolyze lichenan, pustulan, carboxymethyl cellulose, locust bean gum or soluble starch. The sequence is that of Glucan endo-1,3-beta-glucosidase from Cryptopygus antarcticus (Antarctic springtail).